The primary structure comprises 181 residues: ATP synthase subunit delta (181 aa).

Belongs to the ATPase delta chain family. As to quaternary structure, F-type ATPases have 2 components, F(1) - the catalytic core - and F(0) - the membrane proton channel. F(1) has five subunits: alpha(3), beta(3), gamma(1), delta(1), epsilon(1). F(0) has three main subunits: a(1), b(2) and c(10-14). The alpha and beta chains form an alternating ring which encloses part of the gamma chain. F(1) is attached to F(0) by a central stalk formed by the gamma and epsilon chains, while a peripheral stalk is formed by the delta and b chains. The F(1)F(0) complex interacts with SpoIIIJ and YqjG; YqgA is found in the same complex. Interacts with FloT.

It is found in the cell membrane. Its subcellular location is the membrane raft. F(1)F(0) ATP synthase produces ATP from ADP in the presence of a proton or sodium gradient. F-type ATPases consist of two structural domains, F(1) containing the extramembraneous catalytic core and F(0) containing the membrane proton channel, linked together by a central stalk and a peripheral stalk. During catalysis, ATP synthesis in the catalytic domain of F(1) is coupled via a rotary mechanism of the central stalk subunits to proton translocation. In terms of biological role, this protein is part of the stalk that links CF(0) to CF(1). It either transmits conformational changes from CF(0) to CF(1) or is implicated in proton conduction. The sequence is that of ATP synthase subunit delta from Bacillus subtilis (strain 168).